The primary structure comprises 506 residues: Protein NEN3 (506 aa).

Positions 15-176 constitute an Exonuclease domain; sequence FFDLETAVPT…LDDVRMNLEV (162 aa). Residues Asp17 and Glu19 each coordinate Mg(2+). Catalysis depends on His164, which acts as the Proton donor/acceptor. Asp169 contributes to the Mg(2+) binding site. 2 disordered regions span residues 204-240 and 289-313; these read KSPR…SSVD and AEEA…KDES. A compositionally biased stretch (low complexity) spans 222–238; it reads SSTSSSSSPKTDPSSSS. Residues 290–299 show a composition bias toward basic and acidic residues; the sequence is EEAKTVRQQD.

The cofactor is Mg(2+).

Functionally, probable exonuclease that may be involved in enuclation of sieve elements. This chain is Protein NEN3 (NEN3), found in Arabidopsis thaliana (Mouse-ear cress).